Here is a 975-residue protein sequence, read N- to C-terminus: Glycine dehydrogenase (decarboxylating) (975 aa).

Lys-723 is subject to N6-(pyridoxal phosphate)lysine.

This sequence belongs to the GcvP family. In terms of assembly, the glycine cleavage system is composed of four proteins: P, T, L and H. Requires pyridoxal 5'-phosphate as cofactor.

It carries out the reaction N(6)-[(R)-lipoyl]-L-lysyl-[glycine-cleavage complex H protein] + glycine + H(+) = N(6)-[(R)-S(8)-aminomethyldihydrolipoyl]-L-lysyl-[glycine-cleavage complex H protein] + CO2. The glycine cleavage system catalyzes the degradation of glycine. The P protein binds the alpha-amino group of glycine through its pyridoxal phosphate cofactor; CO(2) is released and the remaining methylamine moiety is then transferred to the lipoamide cofactor of the H protein. The chain is Glycine dehydrogenase (decarboxylating) from Burkholderia lata (strain ATCC 17760 / DSM 23089 / LMG 22485 / NCIMB 9086 / R18194 / 383).